The following is a 637-amino-acid chain: Chaperone protein DnaK (637 aa).

Threonine 196 carries the post-translational modification Phosphothreonine; by autocatalysis. The tract at residues 598 to 637 (AEAPGADAPEGQAPQDGGSKKGGEGAVENAEYEVIDGDGK) is disordered. Acidic residues predominate over residues 627-637 (AEYEVIDGDGK).

Belongs to the heat shock protein 70 family.

Acts as a chaperone. This Chlorobium luteolum (strain DSM 273 / BCRC 81028 / 2530) (Pelodictyon luteolum) protein is Chaperone protein DnaK.